We begin with the raw amino-acid sequence, 208 residues long: Putative archaetidylserine decarboxylase proenzyme (208 aa).

S172 acts as the Schiff-base intermediate with substrate; via pyruvic acid in catalysis. At S172 the chain carries Pyruvic acid (Ser); by autocatalysis.

It belongs to the phosphatidylserine decarboxylase family. PSD-A subfamily. As to quaternary structure, heterodimer of a large membrane-associated beta subunit and a small pyruvoyl-containing alpha subunit. Requires pyruvate as cofactor. Is synthesized initially as an inactive proenzyme. Formation of the active enzyme involves a self-maturation process in which the active site pyruvoyl group is generated from an internal serine residue via an autocatalytic post-translational modification. Two non-identical subunits are generated from the proenzyme in this reaction, and the pyruvate is formed at the N-terminus of the alpha chain, which is derived from the carboxyl end of the proenzyme. The post-translation cleavage follows an unusual pathway, termed non-hydrolytic serinolysis, in which the side chain hydroxyl group of the serine supplies its oxygen atom to form the C-terminus of the beta chain, while the remainder of the serine residue undergoes an oxidative deamination to produce ammonia and the pyruvoyl prosthetic group on the alpha chain.

It localises to the cell membrane. The catalysed reaction is archaetidylserine + H(+) = archaetidylethanolamine + CO2. Functionally, catalyzes the formation of archaetidylethanolamine (PtdEtn) from archaetidylserine (PtdSer). The protein is Putative archaetidylserine decarboxylase proenzyme of Methanosarcina mazei (strain ATCC BAA-159 / DSM 3647 / Goe1 / Go1 / JCM 11833 / OCM 88) (Methanosarcina frisia).